Here is a 410-residue protein sequence, read N- to C-terminus: MFRLEDFNFHNKTVFLRVDLNSPMKDGKIISDARFKAVLPTIRYLIESGAKVVIGTHQGKPYSEDYTTTEEHARVLSELLDQHVEYIEDIFGRYAREKIKELKSGEVAILENLRFSAEEVKNKPIEECEKTFLVKKLSKVIDYVVNDAFATAHRSQPSLVGFARIKPMIMGFLMEKEIEALMRAYYSKDSPKIYVLGGAKVEDSLKVVENVLRRERADLVLTGGLVANVFTLAKGFDLGRKNVEFMKKKGLLDYVKHAEEILDEFYPYIRTPVDFAVDYKGERVEIDLLSENRGLLHQYQIMDIGKRTAEKYREILMKARIIVANGPMGVFEREEFAIGTVEVFKAIADSPAFSVLGGGHSIASIQKYGITGITHISTGGGAMLSFFAGEELPVLRALQISYEKFKEVVK.

Substrate contacts are provided by residues 19–21, arginine 34, 57–60, arginine 114, and arginine 154; these read DLN and HQGK. ATP contacts are provided by residues glutamate 332 and 358–361; that span reads GGHS.

The protein belongs to the phosphoglycerate kinase family. As to quaternary structure, homodimer.

It localises to the cytoplasm. It carries out the reaction (2R)-3-phosphoglycerate + ATP = (2R)-3-phospho-glyceroyl phosphate + ADP. The protein operates within carbohydrate degradation; glycolysis; pyruvate from D-glyceraldehyde 3-phosphate: step 2/5. The protein is Phosphoglycerate kinase (pgk) of Pyrococcus horikoshii (strain ATCC 700860 / DSM 12428 / JCM 9974 / NBRC 100139 / OT-3).